A 600-amino-acid chain; its full sequence is Arginine--tRNA ligase (600 aa).

The short motif at 132-142 (ANPTGPLHVGH) is the 'HIGH' region element.

Belongs to the class-I aminoacyl-tRNA synthetase family. As to quaternary structure, monomer.

It is found in the cytoplasm. It carries out the reaction tRNA(Arg) + L-arginine + ATP = L-arginyl-tRNA(Arg) + AMP + diphosphate. The polypeptide is Arginine--tRNA ligase (Ralstonia nicotianae (strain ATCC BAA-1114 / GMI1000) (Ralstonia solanacearum)).